The following is a 154-amino-acid chain: Phosphopantetheine adenylyltransferase (154 aa).

It belongs to the eukaryotic CoaD family.

It is found in the cytoplasm. It catalyses the reaction (R)-4'-phosphopantetheine + ATP + H(+) = 3'-dephospho-CoA + diphosphate. Its pathway is cofactor biosynthesis; coenzyme A biosynthesis. In terms of biological role, reversibly transfers an adenylyl group from ATP to 4'-phosphopantetheine, yielding dephospho-CoA (dPCoA) and pyrophosphate. In Methanosarcina mazei (strain ATCC BAA-159 / DSM 3647 / Goe1 / Go1 / JCM 11833 / OCM 88) (Methanosarcina frisia), this protein is Phosphopantetheine adenylyltransferase.